The primary structure comprises 378 residues: Glutamate 5-kinase (378 aa).

Residue Lys-14 participates in ATP binding. The substrate site is built by Ser-54, Asp-141, and Asn-153. Residue 173-174 (SD) participates in ATP binding. The PUA domain maps to 279–356 (AGRLTVDAGA…DEISEILGYD (78 aa)).

The protein belongs to the glutamate 5-kinase family.

The protein localises to the cytoplasm. The enzyme catalyses L-glutamate + ATP = L-glutamyl 5-phosphate + ADP. It functions in the pathway amino-acid biosynthesis; L-proline biosynthesis; L-glutamate 5-semialdehyde from L-glutamate: step 1/2. In terms of biological role, catalyzes the transfer of a phosphate group to glutamate to form L-glutamate 5-phosphate. The chain is Glutamate 5-kinase from Brucella anthropi (strain ATCC 49188 / DSM 6882 / CCUG 24695 / JCM 21032 / LMG 3331 / NBRC 15819 / NCTC 12168 / Alc 37) (Ochrobactrum anthropi).